Here is a 122-residue protein sequence, read N- to C-terminus: UPF0102 protein Rleg2_4331 (122 aa).

The protein belongs to the UPF0102 family.

The polypeptide is UPF0102 protein Rleg2_4331 (Rhizobium leguminosarum bv. trifolii (strain WSM2304)).